The sequence spans 490 residues: MSRYGLQKLYINGAYTDSTSGDTFDAVNPANGECIAQLQAANAQDVDKAVAAAKQGQPVWAAMTAMERSRILRRAVDILRDRNDELAAIETADTGKPLSETRSVDIVTGADVLEYYAGLIPALEGQQIPLRGSAFVYTRREPLGVVAGIGAWNYPLQIALWKSAPALAAGNAMIFKPSEVTSLTALKLAGIYTEAGLPAGVFNVLTGSGDQVGQMLTEHPGIAKVSFTGGIASGKKVMANAAGSTLKDVTMELGGKSPLIIFADADLDKAADIAMMANFYSSGQVCTNGTRVFVPLALQAAFEQKIVERVKRIHIGDPSDERTNFGPLVSFQHRDSVMRYIDSGKREGATLLIGGYSLTEGALAHGAYVAPTVFTHCRDDMQIVREEIFGPVMSILSYQSEEEVIRRANDTEYGLAAGVVTQDLNRAHRVIHQLQAGICWINTWGESAPEMPVGGYKHSGVGRENGISTLEHYTQIKSIQVELSSFNSVF.

Asp-93 contacts K(+). Residue 150–152 (GAW) coordinates NAD(+). Catalysis depends on Lys-162, which acts as the Charge relay system. 176 to 179 (KPSE) lines the NAD(+) pocket. Val-180 lines the K(+) pocket. Residue 230–233 (GIAS) coordinates NAD(+). Position 246 (Leu-246) interacts with K(+). The active-site Proton acceptor is Glu-252. Gly-254, Cys-286, and Glu-387 together coordinate NAD(+). The Nucleophile role is filled by Cys-286. Cys-286 bears the Cysteine sulfenic acid (-SOH) mark. K(+) contacts are provided by Lys-457 and Gly-460. The active-site Charge relay system is the Glu-464.

The protein belongs to the aldehyde dehydrogenase family. As to quaternary structure, dimer of dimers. K(+) serves as cofactor.

The catalysed reaction is betaine aldehyde + NAD(+) + H2O = glycine betaine + NADH + 2 H(+). It participates in amine and polyamine biosynthesis; betaine biosynthesis via choline pathway; betaine from betaine aldehyde: step 1/1. In terms of biological role, involved in the biosynthesis of the osmoprotectant glycine betaine. Catalyzes the irreversible oxidation of betaine aldehyde to the corresponding acid. This chain is Betaine aldehyde dehydrogenase, found in Yersinia pseudotuberculosis serotype I (strain IP32953).